We begin with the raw amino-acid sequence, 282 residues long: Non-selective voltage-gated ion channel VDAC2 (282 aa).

Residue Ala1 is modified to N-acetylalanine. A run of 19 beta stranded transmembrane segments spans residues 25–34 (LVKLDVKTKS), 38–46 (VEFTTSGTS), 53–63 (VNGSLETKYKW), 68–75 (LTFTEKWN), 79–88 (TLGTEIAIED), 94–103 (LKLTFDTTFS), 110–119 (SGKVKAAYKQ), 122–129 (VNLGCDVD), 136–144 (AIHGSAVVG), 149–157 (LAGYQMTFD), 162–174 (KLTK…GYKT), 177–184 (FQLHTNVN), 188–197 (EFAGSIYQKV), 201–210 (METAVNLAWT), 217–226 (RFGIAAKYQL), 230–237 (AAISAKVN), 241–250 (LVGVGYTQTL), 253–262 (GVKLTLSALV), and 272–281 (HKLGLGLELE). NAD(+) contacts are provided by residues 241–243 (LVG) and 259–263 (SALVD).

The protein belongs to the eukaryotic mitochondrial porin family. As to quaternary structure, monomer, homodimer and higher order oligomers; formation of higher order structures is necessary for scramblase activity. In terms of tissue distribution, expressed in skeletal muscle and oocytes.

Its subcellular location is the mitochondrion outer membrane. It localises to the membrane. The catalysed reaction is chloride(in) = chloride(out). It carries out the reaction K(+)(in) = K(+)(out). The enzyme catalyses a 1,2-diacyl-sn-glycero-3-phospho-L-serine(in) = a 1,2-diacyl-sn-glycero-3-phospho-L-serine(out). It catalyses the reaction a 1,2-diacyl-sn-glycero-3-phosphocholine(in) = a 1,2-diacyl-sn-glycero-3-phosphocholine(out). The catalysed reaction is a 1,2-diacyl-sn-glycero-3-phospho-(1D-myo-inositol)(in) = a 1,2-diacyl-sn-glycero-3-phospho-(1D-myo-inositol)(out). Functionally, non-selective voltage-gated ion channel that mediates the transport of anions and cations through the mitochondrion outer membrane and plasma membrane. The channel adopts an open conformation at zero mV and a closed conformation at both positive and negative potentials. There are two populations of channels; the main that functions in a lower open-state conductance with lower ion selectivity, that switch, in a voltage-dependent manner, from the open to a low-conducting 'closed' state and the other that has a normal ion selectivity in the typical high conductance, 'open' state. Catalyzes the scrambling of phospholipids across the outer mitochondrial membrane; the mechanism is unrelated to channel activity and is capable of translocating both anionic and zwitterionic phospholipids. The protein is Non-selective voltage-gated ion channel VDAC2 of Xenopus laevis (African clawed frog).